A 211-amino-acid chain; its full sequence is 2,3-bisphosphoglycerate-dependent phosphoglycerate mutase (211 aa).

Substrate-binding positions include 9–16 (RHGQSDWN), 22–23 (TG), Arg-61, 88–91 (ERDY), Lys-99, 115–116 (RR), and 159–160 (GN). His-10 (tele-phosphohistidine intermediate) is an active-site residue. The Proton donor/acceptor role is filled by Glu-88.

It belongs to the phosphoglycerate mutase family. BPG-dependent PGAM subfamily. Homodimer.

The catalysed reaction is (2R)-2-phosphoglycerate = (2R)-3-phosphoglycerate. The protein operates within carbohydrate degradation; glycolysis; pyruvate from D-glyceraldehyde 3-phosphate: step 3/5. In terms of biological role, catalyzes the interconversion of 2-phosphoglycerate and 3-phosphoglycerate. This chain is 2,3-bisphosphoglycerate-dependent phosphoglycerate mutase, found in Allorhizobium ampelinum (strain ATCC BAA-846 / DSM 112012 / S4) (Agrobacterium vitis (strain S4)).